The following is a 248-amino-acid chain: Probable proteasome subunit alpha type-3 (248 aa).

This sequence belongs to the peptidase T1A family. As to quaternary structure, the 26S proteasome consists of a 20S proteasome core and two 19S regulatory subunits. The 20S proteasome core is composed of 28 subunits that are arranged in four stacked rings, resulting in a barrel-shaped structure. The two end rings are each formed by seven alpha subunits, and the two central rings are each formed by seven beta subunits. The catalytic chamber with the active sites is on the inside of the barrel.

The protein localises to the cytoplasm. The protein resides in the nucleus. The proteasome is a multicatalytic proteinase complex which is characterized by its ability to cleave peptides with Arg, Phe, Tyr, Leu, and Glu adjacent to the leaving group at neutral or slightly basic pH. The proteasome has an ATP-dependent proteolytic activity. The protein is Probable proteasome subunit alpha type-3 of Schizosaccharomyces pombe (strain 972 / ATCC 24843) (Fission yeast).